The sequence spans 121 residues: Large ribosomal subunit protein bL31 (121 aa).

The interval 1–97 is large ribosomal subunit protein bL31; the sequence is MKEGIHPDYK…AKENRAAKRA (97 aa). Zn(2+)-binding residues include Cys-16, Cys-18, Cys-36, and Cys-39. The segment covering 65-80 has biased composition (low complexity); the sequence is ATPAKAEPAKKAPAAE. The interval 65 to 121 is disordered; it reads ATPAKAEPAKKAPAAEPAKKVEAAKENRAAKRAKAGKSKKSEAAPAAEAPAADAKPE. Positions 74 to 121 are unknown; sequence KKAPAAEPAKKVEAAKENRAAKRAKAGKSKKSEAAPAAEAPAADAKPE. The segment covering 81–93 has biased composition (basic and acidic residues); sequence PAKKVEAAKENRA. Low complexity predominate over residues 107 to 121; sequence AAPAAEAPAADAKPE.

It belongs to the bacterial ribosomal protein bL31 family. Type A subfamily. Part of the 50S ribosomal subunit. The cofactor is Zn(2+).

In terms of biological role, binds the 23S rRNA. The polypeptide is Large ribosomal subunit protein bL31 (Anaeromyxobacter dehalogenans (strain 2CP-C)).